Reading from the N-terminus, the 105-residue chain is Urease subunit beta (105 aa).

Belongs to the urease beta subunit family. In terms of assembly, heterotrimer of UreA (gamma), UreB (beta) and UreC (alpha) subunits. Three heterotrimers associate to form the active enzyme.

It is found in the cytoplasm. The enzyme catalyses urea + 2 H2O + H(+) = hydrogencarbonate + 2 NH4(+). The protein operates within nitrogen metabolism; urea degradation; CO(2) and NH(3) from urea (urease route): step 1/1. The sequence is that of Urease subunit beta from Mycobacterium sp. (strain JLS).